We begin with the raw amino-acid sequence, 391 residues long: NADH-quinone oxidoreductase subunit D (391 aa).

Belongs to the complex I 49 kDa subunit family. NDH-1 is composed of 14 different subunits. Subunits NuoB, C, D, E, F, and G constitute the peripheral sector of the complex.

It is found in the cell inner membrane. It catalyses the reaction a quinone + NADH + 5 H(+)(in) = a quinol + NAD(+) + 4 H(+)(out). NDH-1 shuttles electrons from NADH, via FMN and iron-sulfur (Fe-S) centers, to quinones in the respiratory chain. The immediate electron acceptor for the enzyme in this species is believed to be ubiquinone. Couples the redox reaction to proton translocation (for every two electrons transferred, four hydrogen ions are translocated across the cytoplasmic membrane), and thus conserves the redox energy in a proton gradient. This chain is NADH-quinone oxidoreductase subunit D, found in Rickettsia massiliae (strain Mtu5).